The chain runs to 329 residues: Tagatose 1,6-diphosphate aldolase 2 (329 aa).

This sequence belongs to the aldolase LacD family.

The enzyme catalyses D-tagatofuranose 1,6-bisphosphate = D-glyceraldehyde 3-phosphate + dihydroxyacetone phosphate. The protein operates within carbohydrate metabolism; D-tagatose 6-phosphate degradation; D-glyceraldehyde 3-phosphate and glycerone phosphate from D-tagatose 6-phosphate: step 2/2. In Streptococcus mutans serotype c (strain ATCC 700610 / UA159), this protein is Tagatose 1,6-diphosphate aldolase 2 (lacD2).